The following is a 321-amino-acid chain: Cytochrome c biogenesis protein CcsA (321 aa).

Helical transmembrane passes span 17-37, 43-63, 143-163, 225-245, 258-275, and 287-307; these read IISI…IVGI, KGII…WIYS, MLLS…FLVI, VISL…VWAN, ETWA…LHTR, and IVAS…NLLG.

Belongs to the CcmF/CycK/Ccl1/NrfE/CcsA family. In terms of assembly, may interact with Ccs1.

It localises to the plastid. The protein localises to the chloroplast thylakoid membrane. Its function is as follows. Required during biogenesis of c-type cytochromes (cytochrome c6 and cytochrome f) at the step of heme attachment. The sequence is that of Cytochrome c biogenesis protein CcsA from Drimys granadensis.